A 214-amino-acid chain; its full sequence is CASP-like protein UU5 (214 aa).

A disordered region spans residues 1-20 (MSTVAQDSAPGGGKIQDAME). Over 1-57 (MSTVAQDSAPGGGKIQDAMEQGAPGASSAAVVPEGGHYTQTPSPAFQAVKKNINHMS) the chain is Cytoplasmic. The chain crosses the membrane as a helical span at residues 58–78 (AFSLGLRVAEFVLSVIAFSLM). The Extracellular portion of the chain corresponds to 79–99 (ASADQNGAVYSTFTSYSFVLA). The chain crosses the membrane as a helical span at residues 100–120 (VNVLVVFYTIGQIIMSVLLLV). Topologically, residues 121-138 (SGSTPKKIYLFITFGCDQ) are cytoplasmic. A helical transmembrane segment spans residues 139–159 (LSAFLLMAAGAAGASVALIIN). Over 160–193 (RGGVTDAYGNGCIDGKITSFCSHAQASVAFTFLS) the chain is Extracellular. Residues 194–214 (FFCMVISSLLGVYSLAPYLIL) traverse the membrane as a helical segment.

It belongs to the Casparian strip membrane proteins (CASP) family. As to quaternary structure, homodimer and heterodimers.

Its subcellular location is the cell membrane. The chain is CASP-like protein UU5 from Physcomitrium patens (Spreading-leaved earth moss).